The primary structure comprises 279 residues: Fatty acid elongase 2 (279 aa).

7 helical membrane-spanning segments follow: residues 16 to 36 (LMLE…ALVW), 61 to 81 (AIIV…IVVV), 112 to 132 (FWIG…MFLL), 138 to 158 (PPFL…HTYC), 164 to 184 (MVLF…YFAM), 196 to 216 (FAPF…LVTT), and 242 to 262 (MGVI…LNSY). Positions 142 to 146 (HWYHH) match the HxxHH motif motif. His145 functions as the Nucleophile in the catalytic mechanism.

It belongs to the ELO family.

Its subcellular location is the endoplasmic reticulum membrane. It catalyses the reaction an acyl-CoA + malonyl-CoA + H(+) = a 3-oxoacyl-CoA + CO2 + CoA. The protein operates within lipid metabolism; fatty acid biosynthesis. Involved in the synthesis of fatty acids. Elongates C10 fatty acids to C14. Required for the maintenance of the global lipidome profile in this parasite. The chain is Fatty acid elongase 2 from Trypanosoma cruzi (strain CL Brener).